Reading from the N-terminus, the 291-residue chain is Cell division protein ZipA (291 aa).

Topologically, residues 1 to 5 are periplasmic; that stretch reads MQELR. The chain crosses the membrane as a helical span at residues 6 to 26; it reads FVLIIVGALAIAALLFHGLWT. The Cytoplasmic portion of the chain corresponds to 27-291; it reads SKKEGKSKFG…QEFKVRAAQA (265 aa). A compositionally biased stretch (basic and acidic residues) spans 29–51; it reads KEGKSKFGDKPLRKMKVESDDPP. 2 disordered regions span residues 29–61 and 92–119; these read KEGK…EDDF and ELDE…VQPQ.

This sequence belongs to the ZipA family. As to quaternary structure, interacts with FtsZ via their C-terminal domains.

It is found in the cell inner membrane. In terms of biological role, essential cell division protein that stabilizes the FtsZ protofilaments by cross-linking them and that serves as a cytoplasmic membrane anchor for the Z ring. Also required for the recruitment to the septal ring of downstream cell division proteins. The protein is Cell division protein ZipA of Vibrio cholerae serotype O1 (strain ATCC 39541 / Classical Ogawa 395 / O395).